The chain runs to 131 residues: Small ribosomal subunit protein uS8 (131 aa).

This sequence belongs to the universal ribosomal protein uS8 family. Part of the 30S ribosomal subunit. Contacts proteins S5 and S12.

Its function is as follows. One of the primary rRNA binding proteins, it binds directly to 16S rRNA central domain where it helps coordinate assembly of the platform of the 30S subunit. The chain is Small ribosomal subunit protein uS8 from Shewanella amazonensis (strain ATCC BAA-1098 / SB2B).